The primary structure comprises 318 residues: Protoheme IX farnesyltransferase (318 aa).

Helical transmembrane passes span 29-49 (IIPLLLITTAGSMWIAAQGQV), 51-71 (PVLLLVTMAGGTLAAASAQTI), 102-122 (LIFAIALAVLSFTLLTVFANL), 123-143 (LAASLALSGIIFYVLIYTHWL), 151-171 (IVIGGAAGAIPALVGWAAVTG), 179-199 (LIFAIVFLWTPPHFWALALMI), 219-239 (ATVKQIWYYTLITVVATLLLV), 241-261 (PLHSSGIVYAAIAISLGAVFI), and 280-300 (LFLYSISYMMLLCLGMVIDSL).

It belongs to the UbiA prenyltransferase family. Protoheme IX farnesyltransferase subfamily.

Its subcellular location is the cell inner membrane. The catalysed reaction is heme b + (2E,6E)-farnesyl diphosphate + H2O = Fe(II)-heme o + diphosphate. It functions in the pathway porphyrin-containing compound metabolism; heme O biosynthesis; heme O from protoheme: step 1/1. Functionally, converts heme B (protoheme IX) to heme O by substitution of the vinyl group on carbon 2 of heme B porphyrin ring with a hydroxyethyl farnesyl side group. The chain is Protoheme IX farnesyltransferase from Trichormus variabilis (strain ATCC 29413 / PCC 7937) (Anabaena variabilis).